The chain runs to 54 residues: Small, acid-soluble spore protein gamma-type (54 aa).

The interval 1 to 54 (MAKKNRNKQQQEMQQQQQQHQAEFANEFAEGSSAEQARQQQQKAAGKRQKKNQQ) is disordered. Composition is skewed to low complexity over residues 10–21 (QQEMQQQQQQHQ) and 29–44 (AEGS…QQKA). Residues 45–54 (AGKRQKKNQQ) show a composition bias toward basic residues.

It belongs to the gamma-type SASP family.

Its function is as follows. SASP are proteins degraded in the first minutes of spore germination and provide amino acids for both new protein synthesis and metabolism. These proteins may be involved in dormant spore's high resistance to UV light. The polypeptide is Small, acid-soluble spore protein gamma-type (sspA) (Alkalihalophilus pseudofirmus (strain ATCC BAA-2126 / JCM 17055 / OF4) (Bacillus pseudofirmus)).